The sequence spans 380 residues: Zinc finger protein neuro-d4 (380 aa).

The tract at residues 132 to 164 (ALLDCQKPPPGDFAHDAEGDEMEDDAPRRKNKA) is disordered. The C2H2-type zinc finger occupies 190–213 (YVCDICGKRYKNRPGLSYHYTHTH). 2 PHD-type zinc fingers span residues 262–321 (EGPC…CKNC) and 318–368 (CKNC…CLRQ). Residues Cys265, Cys268, Cys286, Cys289, His294, Cys297, Cys315, Cys318, Cys321, Cys324, Cys336, Cys339, His344, Cys347, Cys362, and Cys365 each contribute to the Zn(2+) site.

The protein belongs to the requiem/DPF family. Component of neuron-specific chromatin remodeling complex (nBAF complex), a subfamily of ATP-dependent SWI/SNF chromatin remodeling complexes.

It localises to the cytoplasm. The protein localises to the nucleus. Its function is as follows. May have an important role in developing neurons by participating in regulation of cell survival, possibly as a neurospecific transcription factor. Belongs to the neuron-specific chromatin remodeling complex (nBAF complex) and plays a role in neural development. The protein is Zinc finger protein neuro-d4 of Gallus gallus (Chicken).